The sequence spans 79 residues: Potassium channel toxin Hge-beta-KTx (79 aa).

The N-terminal stretch at 1-21 (MAKSFFAAFLIIMLISSLVDG) is a signal peptide. Positions 48–79 (EYMCPVVSSFCKQHCARLGKSGQCDLLECICS) constitute a BetaSPN-type CS-alpha/beta domain. Intrachain disulfides connect Cys51–Cys71, Cys58–Cys76, and Cys62–Cys78.

Expressed by the venom gland.

The protein localises to the secreted. Functionally, the full peptide presents antibacterial and cytotoxic activities. The synthetic C-terminus (AA 33-76) inhibits voltage-gated potassium channels Kv1.1/KCNA1, Kv1.2/KCNA2, and Kv1.3/KCNA3. The protein is Potassium channel toxin Hge-beta-KTx of Hoffmannihadrurus gertschi (Scorpion).